The primary structure comprises 85 residues: Large ribosomal subunit protein bL27 (85 aa).

Residues 1–21 (MAHKKAAGSSRNGRDSESKRL) form a disordered region.

This sequence belongs to the bacterial ribosomal protein bL27 family.

In Chromohalobacter salexigens (strain ATCC BAA-138 / DSM 3043 / CIP 106854 / NCIMB 13768 / 1H11), this protein is Large ribosomal subunit protein bL27.